The following is a 329-amino-acid chain: Ankyrin repeat and SOCS box protein 5 (329 aa).

ANK repeat units lie at residues 69-98, 102-131, 135-164, 167-196, 200-229, and 232-261; these read ADRS…NVNA, DHVT…NVNA, DGVT…KPQL, CLPS…DVDQ, HLGT…DVQK, and YWDT…DINA. In terms of domain architecture, SOCS box spans 278–329; sequence LVERLLLQHEATPSSLCQLCRLCIRNYIGRPRLHLIPQLQLPTLLQNFLQYR.

This sequence belongs to the ankyrin SOCS box (ASB) family.

It functions in the pathway protein modification; protein ubiquitination. Functionally, may be a substrate-recognition component of a SCF-like ECS (Elongin-Cullin-SOCS-box protein) E3 ubiquitin-protein ligase complex which mediates the ubiquitination and subsequent proteasomal degradation of target proteins. May play a role in the initiation of arteriogenesis. The chain is Ankyrin repeat and SOCS box protein 5 (ASB5) from Bos taurus (Bovine).